The sequence spans 456 residues: Adenylosuccinate lyase (456 aa).

N(6)-(1,2-dicarboxyethyl)-AMP contacts are provided by residues 15–16, 90–92, and 122–123; these read RY, NHD, and TS. His171 (proton donor/acceptor) is an active-site residue. Residue Gln247 coordinates N(6)-(1,2-dicarboxyethyl)-AMP. Residue Ser295 is the Proton donor/acceptor of the active site. Residues Ser296, 301 to 303, Asn309, Arg335, and 340 to 344 contribute to the N(6)-(1,2-dicarboxyethyl)-AMP site; these read KVN and STVLR.

Belongs to the lyase 1 family. Adenylosuccinate lyase subfamily. As to quaternary structure, homotetramer. Residues from neighboring subunits contribute catalytic and substrate-binding residues to each active site.

It catalyses the reaction N(6)-(1,2-dicarboxyethyl)-AMP = fumarate + AMP. The catalysed reaction is (2S)-2-[5-amino-1-(5-phospho-beta-D-ribosyl)imidazole-4-carboxamido]succinate = 5-amino-1-(5-phospho-beta-D-ribosyl)imidazole-4-carboxamide + fumarate. It functions in the pathway purine metabolism; AMP biosynthesis via de novo pathway; AMP from IMP: step 2/2. It participates in purine metabolism; IMP biosynthesis via de novo pathway; 5-amino-1-(5-phospho-D-ribosyl)imidazole-4-carboxamide from 5-amino-1-(5-phospho-D-ribosyl)imidazole-4-carboxylate: step 2/2. In terms of biological role, catalyzes two reactions in de novo purine nucleotide biosynthesis. Catalyzes the breakdown of 5-aminoimidazole- (N-succinylocarboxamide) ribotide (SAICAR or 2-[5-amino-1-(5-phospho-beta-D-ribosyl)imidazole-4-carboxamido]succinate) to 5-aminoimidazole-4-carboxamide ribotide (AICAR or 5-amino-1-(5-phospho-beta-D-ribosyl)imidazole-4-carboxamide) and fumarate, and of adenylosuccinate (ADS or N(6)-(1,2-dicarboxyethyl)-AMP) to adenosine monophosphate (AMP) and fumarate. The sequence is that of Adenylosuccinate lyase (purB) from Haemophilus influenzae (strain ATCC 51907 / DSM 11121 / KW20 / Rd).